Consider the following 402-residue polypeptide: Endo-polygalacturonase (402 aa).

The first 23 residues, 1–23 (MEYQSGKRVLSLSLGLIGLFSAS), serve as a signal peptide directing secretion. The active-site Proton donor is D249. The active site involves H277.

This sequence belongs to the glycosyl hydrolase 28 family. In terms of assembly, monomer.

The protein resides in the secreted. The enzyme catalyses (1,4-alpha-D-galacturonosyl)n+m + H2O = (1,4-alpha-D-galacturonosyl)n + (1,4-alpha-D-galacturonosyl)m.. Involved in maceration and soft-rotting of plant tissue. In Pectobacterium carotovorum subsp. carotovorum (Erwinia carotovora subsp. carotovora), this protein is Endo-polygalacturonase (peh).